A 244-amino-acid chain; its full sequence is Uracil phosphoribosyltransferase (244 aa).

GTP-binding positions include K59, R68, and 102–105 (YSKI). R112 lines the 5-phospho-alpha-D-ribose 1-diphosphate pocket. R129 provides a ligand contact to GTP. R137 provides a ligand contact to 5-phospho-alpha-D-ribose 1-diphosphate. R158 contacts GTP. 5-phospho-alpha-D-ribose 1-diphosphate contacts are provided by residues D164 and 164-172 (DPMCATAGS). Uracil-binding positions include I229 and 234 to 236 (GDF). D235 is a binding site for 5-phospho-alpha-D-ribose 1-diphosphate.

This sequence belongs to the UPRTase family. Monomer. Forms homodimers in presence of substrates and homotetramers in the presence of GTP. Mg(2+) serves as cofactor.

It catalyses the reaction UMP + diphosphate = 5-phospho-alpha-D-ribose 1-diphosphate + uracil. It participates in pyrimidine metabolism; UMP biosynthesis via salvage pathway; UMP from uracil: step 1/1. With respect to regulation, allosterically activated by GTP. Binding of GTP leads to 5-time activation of the enzyme. Its function is as follows. Catalyzes the conversion of uracil and 5-phospho-alpha-D-ribose 1-diphosphate (PRPP) to UMP and diphosphate. The chain is Uracil phosphoribosyltransferase (uprt) from Toxoplasma gondii.